We begin with the raw amino-acid sequence, 433 residues long: Zinc finger and SCAN domain-containing protein 4 (433 aa).

In terms of domain architecture, SCAN box spans Arg-44–Ser-126. Polar residues-rich tracts occupy residues Thr-165 to Thr-185, Gly-195 to Thr-210, and Gln-277 to Glu-299. 2 disordered regions span residues Thr-165–Thr-210 and Ile-275–His-301. C2H2-type zinc fingers lie at residues Tyr-312–His-334, Phe-340–His-362, Phe-368–His-390, and Tyr-396–His-418.

It localises to the nucleus. Its subcellular location is the chromosome. It is found in the telomere. In terms of biological role, embryonic stem (ES) cell-specific transcription factor required to regulate ES cell pluripotency. Binds telomeres and plays a key role in genomic stability in ES cells by regulating telomere elongation. Acts as an activator of spontaneous telomere sister chromatid exchange (T-SCE) and telomere elongation in undifferentiated ES cells. This is Zinc finger and SCAN domain-containing protein 4 (ZSCAN4) from Homo sapiens (Human).